Consider the following 605-residue polypeptide: Proline--tRNA ligase (605 aa).

This sequence belongs to the class-II aminoacyl-tRNA synthetase family. ProS type 1 subfamily. In terms of assembly, homodimer.

The protein resides in the cytoplasm. It carries out the reaction tRNA(Pro) + L-proline + ATP = L-prolyl-tRNA(Pro) + AMP + diphosphate. Its function is as follows. Catalyzes the attachment of proline to tRNA(Pro) in a two-step reaction: proline is first activated by ATP to form Pro-AMP and then transferred to the acceptor end of tRNA(Pro). As ProRS can inadvertently accommodate and process non-cognate amino acids such as alanine and cysteine, to avoid such errors it has two additional distinct editing activities against alanine. One activity is designated as 'pretransfer' editing and involves the tRNA(Pro)-independent hydrolysis of activated Ala-AMP. The other activity is designated 'posttransfer' editing and involves deacylation of mischarged Ala-tRNA(Pro). The misacylated Cys-tRNA(Pro) is not edited by ProRS. The protein is Proline--tRNA ligase of Bifidobacterium adolescentis (strain ATCC 15703 / DSM 20083 / NCTC 11814 / E194a).